Here is a 409-residue protein sequence, read N- to C-terminus: N-acetylglucosamine-6-phosphate deacetylase (409 aa).

Glutamate 143 serves as a coordination point for a divalent metal cation. 154-155 (AH) lines the substrate pocket. The a divalent metal cation site is built by histidine 211 and histidine 232. Substrate contacts are provided by residues 235-236 (NA), arginine 243, and 269-272 (DGIH). Aspartate 294 (proton donor/acceptor) is an active-site residue. A substrate-binding site is contributed by 328–330 (LSG).

It belongs to the metallo-dependent hydrolases superfamily. NagA family. A divalent metal cation serves as cofactor.

It carries out the reaction N-acetyl-D-glucosamine 6-phosphate + H2O = D-glucosamine 6-phosphate + acetate. Its pathway is amino-sugar metabolism; N-acetylneuraminate degradation. Hydrolyzes the N-glycolyl group from N-glycolylglucosamine 6-phosphate (GlcNGc-6-P) in the N-glycolylneuraminic acid (Neu5Gc) degradation pathway. The sequence is that of N-acetylglucosamine-6-phosphate deacetylase (AMDHD2) from Bos taurus (Bovine).